The following is a 156-amino-acid chain: MKLHDLKPTPGSRKDRKRVGRGPGGTDKTAGRGHKGQKSRSGAGKGAFFEGGRSRLIARLPKRGFNNVGTTYEVVKLSQLQDLEDTTFDRDTLEAYRLVRRKNRPVKLLASGEISRAVTVHVDAASAAAIKAVEAAGGRVVLPEVQTQQDDAQKAE.

Residues 1–48 form a disordered region; the sequence is MKLHDLKPTPGSRKDRKRVGRGPGGTDKTAGRGHKGQKSRSGAGKGAF.

It belongs to the universal ribosomal protein uL15 family. Part of the 50S ribosomal subunit. Contacts proteins L4, L21 and L35.

Functionally, binds to the 23S rRNA. The polypeptide is Large ribosomal subunit protein uL15 (rplO) (Deinococcus radiodurans (strain ATCC 13939 / DSM 20539 / JCM 16871 / CCUG 27074 / LMG 4051 / NBRC 15346 / NCIMB 9279 / VKM B-1422 / R1)).